The sequence spans 243 residues: MSSESEKGQERLIQAAKLFSCHIQDLVSFINRFIELFNLTMKTQILPMSLNEESCIKDFLEQMIENFKEMQLMADVKQKEMQKEPLCSKVVTEVTSAGGKCADLSPHHMAEEMLKTIQTSGAALVPKTSHILGSLETSLSLLMQFPIMGLRLSDFHSEETKEQPDATTSEKSRSPECPKTTKEEALKRLQDMLCPENAHKPLETAAEELEQFIKTMDMTLQVLRKSIKTMEGNSCVLTQVQGK.

A disordered region spans residues 157-181; sequence SEETKEQPDATTSEKSRSPECPKTT.

This is an uncharacterized protein from Rattus norvegicus (Rat).